The sequence spans 590 residues: Beta-fructofuranosidase, insoluble isoenzyme 4 (590 aa).

The N-terminal stretch at 1–28 (MVMAPIPQPWHQWPFLILFFLVLFSCES) is a signal peptide. Residues 71 to 74 (WIND) and glutamine 90 contribute to the substrate site. Aspartate 74 is an active-site residue. Asparagine 94 carries an N-linked (GlcNAc...) asparagine glycan. Substrate is bound by residues tryptophan 98 and 133-134 (WT). A glycan (N-linked (GlcNAc...) asparagine) is linked at asparagine 167. Residue 198 to 199 (RD) coordinates substrate. N-linked (GlcNAc...) asparagine glycosylation occurs at asparagine 247. The substrate site is built by glutamate 253 and aspartate 287. Residue asparagine 345 is glycosylated (N-linked (GlcNAc...) asparagine). An intrachain disulfide couples cysteine 445 to cysteine 491. Asparagine 565 carries N-linked (GlcNAc...) asparagine glycosylation.

It belongs to the glycosyl hydrolase 32 family. In terms of tissue distribution, expressed in leaves. Expressed at moderate levels in roots and flowers, and weakly in seeds.

It localises to the secreted. The protein localises to the extracellular space. Its subcellular location is the apoplast. The protein resides in the cell wall. It catalyses the reaction Hydrolysis of terminal non-reducing beta-D-fructofuranoside residues in beta-D-fructofuranosides.. May play a role in sucrose partitioning during seed development and in stress response. The polypeptide is Beta-fructofuranosidase, insoluble isoenzyme 4 (CIN4) (Oryza sativa subsp. japonica (Rice)).